The sequence spans 144 residues: Small ribosomal subunit protein eS19A (144 aa).

It belongs to the eukaryotic ribosomal protein eS19 family. Component of the small ribosomal subunit (SSU). Mature yeast ribosomes consist of a small (40S) and a large (60S) subunit. The 40S small subunit contains 1 molecule of ribosomal RNA (18S rRNA) and 33 different proteins (encoded by 57 genes). The large 60S subunit contains 3 rRNA molecules (25S, 5.8S and 5S rRNA) and 46 different proteins (encoded by 81 genes).

The protein localises to the cytoplasm. In terms of biological role, component of the ribosome, a large ribonucleoprotein complex responsible for the synthesis of proteins in the cell. The small ribosomal subunit (SSU) binds messenger RNAs (mRNAs) and translates the encoded message by selecting cognate aminoacyl-transfer RNA (tRNA) molecules. The large subunit (LSU) contains the ribosomal catalytic site termed the peptidyl transferase center (PTC), which catalyzes the formation of peptide bonds, thereby polymerizing the amino acids delivered by tRNAs into a polypeptide chain. The nascent polypeptides leave the ribosome through a tunnel in the LSU and interact with protein factors that function in enzymatic processing, targeting, and the membrane insertion of nascent chains at the exit of the ribosomal tunnel. eS19 is required for proper maturation of the small (40S) ribosomal subunit. Binds to 40S pre-ribosomal particles, probably required after association of NOC4 but before association of ENP1, TSR1 and RIO2 with 20/21S pre-rRNA. The protein is Small ribosomal subunit protein eS19A of Saccharomyces cerevisiae (strain ATCC 204508 / S288c) (Baker's yeast).